The following is a 1214-amino-acid chain: Myosin-1 (1214 aa).

The disordered stretch occupies residues 1-21; the sequence is MAIIKRGARNKTAQEPAKRSA. The region spanning 36 to 715 is the Myosin motor domain; that stretch reads VGVSDLTLLS…TLFALEHMRD (680 aa). 129-136 contributes to the ATP binding site; the sequence is GESGAGKT. Ser-357 carries the post-translational modification Phosphoserine. Positions 404 to 486 are actin-binding; that stretch reads SIGILDIYGF…PGIFAAMNDS (83 aa). IQ domains follow at residues 719 to 739 and 740 to 765; these read YNMAARIQRAWRRFLQRRIDS and ATRIQRAIREKKGGNKYEKLRDEGSK. Positions 771–961 constitute a TH1 domain; sequence KERRTMSLLG…TILVRRGHPA (191 aa). 3 disordered regions span residues 926–1090, 1129–1177, and 1193–1214; these read KPGK…SELP, HQGG…AAAQ, and NKMRVESDGEDNGNDDDDDDDW. Positions 965–980 are enriched in basic residues; that stretch reads QKKKPKKGKGHSKHHS. 2 stretches are compositionally biased toward low complexity: residues 981 to 1000 and 1037 to 1057; these read TSTSAPRSSVQSSQPSAPVS and AAQPQATPQPAQVTQPQQKKV. A compositionally biased stretch (pro residues) spans 1058-1067; it reads APPPPPPPPM. Positions 1069–1131 constitute an SH3 domain; the sequence is SSEPKYEAAY…PTNYVVKHQG (63 aa). The span at 1157–1177 shows a compositional bias: low complexity; sequence VSSSQSETATTATPASVAAAQ. Residues 1200–1214 are compositionally biased toward acidic residues; it reads DGEDNGNDDDDDDDW.

It belongs to the TRAFAC class myosin-kinesin ATPase superfamily. Myosin family. In terms of processing, phosphorylation of the TEDS site (Ser-357) is required for the polarization of the actin cytoskeleton. Phosphorylation probably activates the myosin-I ATPase activity.

It localises to the cytoplasm. It is found in the cytoskeleton. The protein resides in the actin patch. Its function is as follows. Type-I myosin implicated in the organization of the actin cytoskeleton. Required for proper actin cytoskeleton polarization. At the cell cortex, assembles in patch-like structures together with proteins from the actin-polymerizing machinery and promotes actin assembly. Functions as actin nucleation-promoting factor (NPF) for the Arp2/3 complex. This Vanderwaltozyma polyspora (strain ATCC 22028 / DSM 70294 / BCRC 21397 / CBS 2163 / NBRC 10782 / NRRL Y-8283 / UCD 57-17) (Kluyveromyces polysporus) protein is Myosin-1 (MYO1).